The following is a 259-amino-acid chain: Thiazole synthase (259 aa).

The Schiff-base intermediate with DXP role is filled by Lys-98. Residues Gly-159, 185 to 186, and 207 to 208 each bind 1-deoxy-D-xylulose 5-phosphate; these read AG and NS.

It belongs to the ThiG family. As to quaternary structure, homotetramer. Forms heterodimers with either ThiH or ThiS.

The protein localises to the cytoplasm. It catalyses the reaction [ThiS sulfur-carrier protein]-C-terminal-Gly-aminoethanethioate + 2-iminoacetate + 1-deoxy-D-xylulose 5-phosphate = [ThiS sulfur-carrier protein]-C-terminal Gly-Gly + 2-[(2R,5Z)-2-carboxy-4-methylthiazol-5(2H)-ylidene]ethyl phosphate + 2 H2O + H(+). The protein operates within cofactor biosynthesis; thiamine diphosphate biosynthesis. Its function is as follows. Catalyzes the rearrangement of 1-deoxy-D-xylulose 5-phosphate (DXP) to produce the thiazole phosphate moiety of thiamine. Sulfur is provided by the thiocarboxylate moiety of the carrier protein ThiS. In vitro, sulfur can be provided by H(2)S. This is Thiazole synthase from Chlorobium limicola (strain DSM 245 / NBRC 103803 / 6330).